The sequence spans 266 residues: U2 small nuclear ribonucleoprotein A' (266 aa).

LRR repeat units lie at residues 30–51, 53–74, 75–95, and 97–118; these read ILRN…NHLA, PTHI…HHRD, DIET…ALLP, and KLKS…IPLS. An LRRCT domain is found at 132-170; sequence NPICHLSEYRQRILALVPSLEVLDFKLVSQAEKAQAVKD.

It belongs to the U2 small nuclear ribonucleoprotein A family. Associated with the spliceosome.

It is found in the nucleus. Involved in pre-mRNA splicing. This is U2 small nuclear ribonucleoprotein A' (LEA1) from Candida glabrata (strain ATCC 2001 / BCRC 20586 / JCM 3761 / NBRC 0622 / NRRL Y-65 / CBS 138) (Yeast).